A 167-amino-acid polypeptide reads, in one-letter code: S-ribosylhomocysteine lyase (167 aa).

Residues H54, H58, and C128 each contribute to the Fe cation site.

The protein belongs to the LuxS family. Homodimer. The cofactor is Fe cation.

It catalyses the reaction S-(5-deoxy-D-ribos-5-yl)-L-homocysteine = (S)-4,5-dihydroxypentane-2,3-dione + L-homocysteine. In terms of biological role, involved in the synthesis of autoinducer 2 (AI-2) which is secreted by bacteria and is used to communicate both the cell density and the metabolic potential of the environment. The regulation of gene expression in response to changes in cell density is called quorum sensing. Catalyzes the transformation of S-ribosylhomocysteine (RHC) to homocysteine (HC) and 4,5-dihydroxy-2,3-pentadione (DPD). The polypeptide is S-ribosylhomocysteine lyase (Haemophilus influenzae (strain PittGG)).